Reading from the N-terminus, the 615-residue chain is Crinkler effector protein 15 (615 aa).

An N-terminal signal peptide occupies residues 1 to 17 (MVKLVCAIVGVAGSAFP). The interval 18 to 54 (VDIDASQLVGDLKKAIKAENAMTFTGDAKDLQLFLAK) is LQLFLAK domain. The interval 55-136 (QPVDDESGKE…NMELPSSEQI (82 aa)) is DWL domain. An HVLVXXP motif motif is present at residues 137-143 (HVLVVVP). A glycan (N-linked (GlcNAc...) asparagine) is linked at Asn531.

The protein belongs to the Crinkler effector family.

It localises to the secreted. Its subcellular location is the host nucleus. Functionally, secreted effector that elicits necrosis in host plants, a characteristic of plant innate immunity. The chain is Crinkler effector protein 15 from Phytophthora infestans (Potato late blight agent).